The chain runs to 238 residues: Cysteine-rich venom protein pseudechetoxin-like (238 aa).

The first 19 residues, 1–19 (MIAFIVLLSLAAVLQQSSG), serve as a signal peptide directing secretion. Positions 20–28 (TVDFASESS) are excised as a propeptide. One can recognise an SCP domain in the interval 38–164 (VDKHNDLRRS…STKYLYVCQY (127 aa)). Cystine bridges form between Cys75–Cys153, Cys92–Cys165, Cys148–Cys162, Cys184–Cys191, Cys187–Cys196, Cys200–Cys233, Cys209–Cys227, and Cys218–Cys231. The ShKT domain occupies 200-233 (CKHNDDLSNCKPLAKKSKCQTEWIKSKCPATCFC).

The protein belongs to the CRISP family. In terms of tissue distribution, expressed by the venom gland.

Its subcellular location is the secreted. Its function is as follows. Blocks olfactory (CNGA2) and retinal (CNGA1) CNG channel currents. Does not affect neither depolarization- nor caffeine-induced contraction of smooth muscle. This is Cysteine-rich venom protein pseudechetoxin-like from Oxyuranus microlepidotus (Inland taipan).